The following is an 80-amino-acid chain: Protein UL148A (80 aa).

Residues 10 to 30 form a helical membrane-spanning segment; that stretch reads WIPVCVVVVMTSVVLFAGLHV.

Its subcellular location is the host membrane. Plays a role in the down-regulation of the host NKG2D ligand MICA by utilizing the lysosomal pathway for its degradation. In turn, MICA reduction diminishes NK-cell killing of HCMV-infected cells. This Human cytomegalovirus (strain Merlin) (HHV-5) protein is Protein UL148A (UL148A).